A 276-amino-acid polypeptide reads, in one-letter code: Phospholipid phosphatase 2 (276 aa).

The Cytoplasmic segment spans residues 1–4; it reads MERR. The chain crosses the membrane as a helical span at residues 5–25; sequence WVFVLLDVLCVLVASLPFIIL. The Lumenal segment spans residues 26 to 51; it reads TLVNAPYKRGFYCGDDSIRYPYRPDT. The helical transmembrane segment at 52-72 threads the bilayer; sequence ITHGLMAGVIITATVILVSLG. The Cytoplasmic portion of the chain corresponds to 73-87; it reads EAYLVYTDRLYSRSN. A helical transmembrane segment spans residues 88 to 108; the sequence is FNNYVAAIYKVLGTFLFGAAV. The Lumenal portion of the chain corresponds to 109 to 161; the sequence is SQSLTDLAKYMIGRLRPSFLAVCDPDWSQVNCSGYVQLEVCRGSPANVTEARL. The tract at residues 117-125 is phosphatase sequence motif I; sequence KYMIGRLRP. N-linked (GlcNAc...) asparagine glycosylation is found at N139 and N155. Residues 162-182 traverse the membrane as a helical segment; sequence SFYSGHSSFGMYCMLFLALYV. Residues 164–167 are phosphatase sequence motif II; sequence YSGH. Catalysis depends on H167, which acts as the Proton donors. The Cytoplasmic portion of the chain corresponds to 183 to 189; it reads QARLCWK. The helical transmembrane segment at 190–210 threads the bilayer; it reads WARLLRPTVQFFLVAFAIYVG. The Lumenal segment spans residues 211-218; that stretch reads YTRVSDHK. The phosphatase sequence motif III stretch occupies residues 212 to 223; sequence TRVSDHKHHWSD. H219 (nucleophile) is an active-site residue. The chain crosses the membrane as a helical span at residues 219–239; that stretch reads HHWSDVLVGLLQGALVACLTV. The Cytoplasmic segment spans residues 240–276; sequence RYVSDFFKSRPPQPCQEDEVPERKPSLSLTLTLGDRP. The interval 251-276 is disordered; that stretch reads PQPCQEDEVPERKPSLSLTLTLGDRP.

It belongs to the PA-phosphatase related phosphoesterase family. Forms functional homodimers and homooligomers. Can also form heterooligomers with PLPP1 and PLPP3. In terms of processing, N-glycosylated. Expressed at high levels in lung, liver and kidney; at low levels in heart and brain, and was not detected in skeletal muscle.

It is found in the membrane. It localises to the cell membrane. Its subcellular location is the early endosome membrane. The protein resides in the endoplasmic reticulum membrane. The catalysed reaction is a 1,2-diacyl-sn-glycero-3-phosphate + H2O = a 1,2-diacyl-sn-glycerol + phosphate. The enzyme catalyses 1,2-dihexadecanoyl-sn-glycero-3-phosphate + H2O = 1,2-dihexadecanoyl-sn-glycerol + phosphate. It catalyses the reaction 1,2-di-(9Z-octadecenoyl)-sn-glycero-3-phosphate + H2O = 1,2-di-(9Z-octadecenoyl)-sn-glycerol + phosphate. It carries out the reaction a monoacyl-sn-glycero-3-phosphate + H2O = a monoacylglycerol + phosphate. The catalysed reaction is (9Z)-octadecenoyl-sn-glycero-3-phosphate + H2O = (9Z-octadecenoyl)-glycerol + phosphate. The enzyme catalyses sphing-4-enine 1-phosphate + H2O = sphing-4-enine + phosphate. It catalyses the reaction an N-acylsphing-4-enine 1-phosphate + H2O = an N-acylsphing-4-enine + phosphate. It carries out the reaction N-(octanoyl)-sphing-4-enine-1-phosphate + H2O = N-octanoylsphing-4-enine + phosphate. The catalysed reaction is N-(9Z-octadecenoyl)-ethanolamine phosphate + H2O = N-(9Z-octadecenoyl) ethanolamine + phosphate. It functions in the pathway lipid metabolism; phospholipid metabolism. With respect to regulation, magnesium-independent phospholipid phosphatase. Insensitive to N-ethylmaleimide. Functionally, magnesium-independent phospholipid phosphatase that catalyzes the dephosphorylation of a variety of glycerolipid and sphingolipid phosphate esters including phosphatidate/PA, lysophosphatidate/LPA, sphingosine 1-phosphate/S1P and ceramide 1-phosphate/C1P. Has no apparent extracellular phosphatase activity and therefore most probably acts intracellularly. Also acts on N-oleoyl ethanolamine phosphate/N-(9Z-octadecenoyl)-ethanolamine phosphate, a potential physiological compound. Through dephosphorylation of these bioactive lipid mediators produces new bioactive compounds and may regulate signal transduction in different cellular processes. Indirectly regulates, for instance, cell cycle G1/S phase transition through its phospholipid phosphatase activity. In Mus musculus (Mouse), this protein is Phospholipid phosphatase 2.